Consider the following 402-residue polypeptide: Tyrosine--tRNA ligase (402 aa).

The 'HIGH' region motif lies at 48 to 57; it reads PSRPDLHLGH. A 'KMSKS' region motif is present at residues 232-236; the sequence is KMSKS. Position 235 (K235) interacts with ATP. The S4 RNA-binding domain occupies 339 to 402; that stretch reads MPIIDLLTLL…KRKFFKIRSK (64 aa).

Belongs to the class-I aminoacyl-tRNA synthetase family. TyrS type 2 subfamily. In terms of assembly, homodimer.

The protein localises to the cytoplasm. It catalyses the reaction tRNA(Tyr) + L-tyrosine + ATP = L-tyrosyl-tRNA(Tyr) + AMP + diphosphate + H(+). Catalyzes the attachment of tyrosine to tRNA(Tyr) in a two-step reaction: tyrosine is first activated by ATP to form Tyr-AMP and then transferred to the acceptor end of tRNA(Tyr). The polypeptide is Tyrosine--tRNA ligase (Chlorobium chlorochromatii (strain CaD3)).